The following is a 301-amino-acid chain: Probable 5-dehydro-4-deoxyglucarate dehydratase (301 aa).

The protein belongs to the DapA family.

It catalyses the reaction 5-dehydro-4-deoxy-D-glucarate + H(+) = 2,5-dioxopentanoate + CO2 + H2O. It participates in carbohydrate acid metabolism; D-glucarate degradation; 2,5-dioxopentanoate from D-glucarate: step 2/2. In Cereibacter sphaeroides (strain ATCC 17023 / DSM 158 / JCM 6121 / CCUG 31486 / LMG 2827 / NBRC 12203 / NCIMB 8253 / ATH 2.4.1.) (Rhodobacter sphaeroides), this protein is Probable 5-dehydro-4-deoxyglucarate dehydratase.